We begin with the raw amino-acid sequence, 218 residues long: 3,4-dihydroxy-2-butanone 4-phosphate synthase (218 aa).

Residues 38–39, Asp-43, 151–155, and Glu-175 each bind D-ribulose 5-phosphate; these read RE and RRGHT. Glu-39 provides a ligand contact to Mg(2+). Position 154 (His-154) interacts with Mg(2+).

It belongs to the DHBP synthase family. In terms of assembly, homodimer. Mg(2+) serves as cofactor. Mn(2+) is required as a cofactor.

The enzyme catalyses D-ribulose 5-phosphate = (2S)-2-hydroxy-3-oxobutyl phosphate + formate + H(+). Its pathway is cofactor biosynthesis; riboflavin biosynthesis; 2-hydroxy-3-oxobutyl phosphate from D-ribulose 5-phosphate: step 1/1. Functionally, catalyzes the conversion of D-ribulose 5-phosphate to formate and 3,4-dihydroxy-2-butanone 4-phosphate. The protein is 3,4-dihydroxy-2-butanone 4-phosphate synthase of Vibrio cholerae serotype O1 (strain M66-2).